A 438-amino-acid polypeptide reads, in one-letter code: DNA primase DnaG (438 aa).

The Toprim domain maps to 171–245 (DAILVVEGRA…DIDYVARAPE (75 aa)). Mg(2+) contacts are provided by Glu177, Asp219, and Asp221.

This sequence belongs to the archaeal DnaG primase family. In terms of assembly, forms a ternary complex with MCM helicase and DNA. Component of the archaeal exosome complex. It depends on Mg(2+) as a cofactor.

The catalysed reaction is ssDNA + n NTP = ssDNA/pppN(pN)n-1 hybrid + (n-1) diphosphate.. In terms of biological role, RNA polymerase that catalyzes the synthesis of short RNA molecules used as primers for DNA polymerase during DNA replication. Also part of the exosome, which is a complex involved in RNA degradation. Acts as a poly(A)-binding protein that enhances the interaction between heteromeric, adenine-rich transcripts and the exosome. The chain is DNA primase DnaG from Methanothrix thermoacetophila (strain DSM 6194 / JCM 14653 / NBRC 101360 / PT) (Methanosaeta thermophila).